A 544-amino-acid polypeptide reads, in one-letter code: Chaperonin GroEL 4 (544 aa).

Residues 30-33 (TLGP), Lys-51, 87-91 (DGTTT), Gly-415, and Asp-496 contribute to the ATP site.

The protein belongs to the chaperonin (HSP60) family. In terms of assembly, forms a cylinder of 14 subunits composed of two heptameric rings stacked back-to-back. Interacts with the co-chaperonin GroES.

Its subcellular location is the cytoplasm. The catalysed reaction is ATP + H2O + a folded polypeptide = ADP + phosphate + an unfolded polypeptide.. In terms of biological role, together with its co-chaperonin GroES, plays an essential role in assisting protein folding. The GroEL-GroES system forms a nano-cage that allows encapsulation of the non-native substrate proteins and provides a physical environment optimized to promote and accelerate protein folding. The protein is Chaperonin GroEL 4 of Sinorhizobium medicae (strain WSM419) (Ensifer medicae).